The following is a 368-amino-acid chain: Phosphoserine aminotransferase (368 aa).

Position 44 (arginine 44) interacts with L-glutamate. Pyridoxal 5'-phosphate contacts are provided by residues 78–79 (AT), tryptophan 104, threonine 157, aspartate 179, and glutamine 202. An N6-(pyridoxal phosphate)lysine modification is found at lysine 203. Residue 244–245 (NT) participates in pyridoxal 5'-phosphate binding.

The protein belongs to the class-V pyridoxal-phosphate-dependent aminotransferase family. SerC subfamily. In terms of assembly, homodimer. Pyridoxal 5'-phosphate serves as cofactor.

The protein localises to the cytoplasm. The catalysed reaction is O-phospho-L-serine + 2-oxoglutarate = 3-phosphooxypyruvate + L-glutamate. The enzyme catalyses 4-(phosphooxy)-L-threonine + 2-oxoglutarate = (R)-3-hydroxy-2-oxo-4-phosphooxybutanoate + L-glutamate. The protein operates within amino-acid biosynthesis; L-serine biosynthesis; L-serine from 3-phospho-D-glycerate: step 2/3. It functions in the pathway cofactor biosynthesis; pyridoxine 5'-phosphate biosynthesis; pyridoxine 5'-phosphate from D-erythrose 4-phosphate: step 3/5. In terms of biological role, catalyzes the reversible conversion of 3-phosphohydroxypyruvate to phosphoserine and of 3-hydroxy-2-oxo-4-phosphonooxybutanoate to phosphohydroxythreonine. In Neisseria meningitidis serogroup C / serotype 2a (strain ATCC 700532 / DSM 15464 / FAM18), this protein is Phosphoserine aminotransferase.